The sequence spans 198 residues: Ribonuclease HII (198 aa).

In terms of domain architecture, RNase H type-2 spans 10–198 (QLVAGVDEVG…PVKRALGLAS (189 aa)). The a divalent metal cation site is built by Asp-16, Glu-17, and Asp-108.

The protein belongs to the RNase HII family. Mn(2+) serves as cofactor. It depends on Mg(2+) as a cofactor.

The protein resides in the cytoplasm. The enzyme catalyses Endonucleolytic cleavage to 5'-phosphomonoester.. In terms of biological role, endonuclease that specifically degrades the RNA of RNA-DNA hybrids. The polypeptide is Ribonuclease HII (Shigella dysenteriae serotype 1 (strain Sd197)).